Reading from the N-terminus, the 179-residue chain is Bifunctional protein PyrR (179 aa).

A PRPP-binding motif is present at residues 100-112 (VILIDDVLFTGRT).

This sequence belongs to the purine/pyrimidine phosphoribosyltransferase family. PyrR subfamily.

It carries out the reaction UMP + diphosphate = 5-phospho-alpha-D-ribose 1-diphosphate + uracil. Its function is as follows. Regulates the transcription of the pyrimidine nucleotide (pyr) operon in response to exogenous pyrimidines. Also displays a weak uracil phosphoribosyltransferase activity which is not physiologically significant. The chain is Bifunctional protein PyrR from Mannheimia succiniciproducens (strain KCTC 0769BP / MBEL55E).